The following is a 176-amino-acid chain: Probable inosine/xanthosine triphosphatase (176 aa).

Asp-36 serves as a coordination point for Mg(2+).

The protein belongs to the YjjX NTPase family. As to quaternary structure, homodimer. Requires Mg(2+) as cofactor. It depends on Mn(2+) as a cofactor.

It carries out the reaction XTP + H2O = XDP + phosphate + H(+). The enzyme catalyses ITP + H2O = IDP + phosphate + H(+). Functionally, phosphatase that hydrolyzes non-canonical purine nucleotides such as XTP and ITP to their respective diphosphate derivatives. Probably excludes non-canonical purines from DNA/RNA precursor pool, thus preventing their incorporation into DNA/RNA and avoiding chromosomal lesions. The sequence is that of Probable inosine/xanthosine triphosphatase from Saccharolobus islandicus (strain M.14.25 / Kamchatka #1) (Sulfolobus islandicus).